Reading from the N-terminus, the 258-residue chain is Tryptophan synthase alpha chain (258 aa).

Active-site proton acceptor residues include Glu-47 and Asp-58.

Belongs to the TrpA family. Tetramer of two alpha and two beta chains.

The enzyme catalyses (1S,2R)-1-C-(indol-3-yl)glycerol 3-phosphate + L-serine = D-glyceraldehyde 3-phosphate + L-tryptophan + H2O. It functions in the pathway amino-acid biosynthesis; L-tryptophan biosynthesis; L-tryptophan from chorismate: step 5/5. Functionally, the alpha subunit is responsible for the aldol cleavage of indoleglycerol phosphate to indole and glyceraldehyde 3-phosphate. The protein is Tryptophan synthase alpha chain of Bacillus cereus (strain ATCC 10987 / NRS 248).